The chain runs to 144 residues: Small ribosomal subunit protein uS12 (144 aa).

Residue D103 is modified to 3-methylthioaspartic acid. The interval 121–144 is disordered; the sequence is VANRKQGRSKYGTKKASAVPAKKK.

This sequence belongs to the universal ribosomal protein uS12 family. Part of the 30S ribosomal subunit. Contacts proteins S8 and S17. May interact with IF1 in the 30S initiation complex.

With S4 and S5 plays an important role in translational accuracy. Functionally, interacts with and stabilizes bases of the 16S rRNA that are involved in tRNA selection in the A site and with the mRNA backbone. Located at the interface of the 30S and 50S subunits, it traverses the body of the 30S subunit contacting proteins on the other side and probably holding the rRNA structure together. The combined cluster of proteins S8, S12 and S17 appears to hold together the shoulder and platform of the 30S subunit. In Roseiflexus castenholzii (strain DSM 13941 / HLO8), this protein is Small ribosomal subunit protein uS12.